Here is a 256-residue protein sequence, read N- to C-terminus: Imidazole glycerol phosphate synthase subunit HisF (256 aa).

Catalysis depends on residues D12 and D131.

The protein belongs to the HisA/HisF family. As to quaternary structure, heterodimer of HisH and HisF.

It is found in the cytoplasm. It catalyses the reaction 5-[(5-phospho-1-deoxy-D-ribulos-1-ylimino)methylamino]-1-(5-phospho-beta-D-ribosyl)imidazole-4-carboxamide + L-glutamine = D-erythro-1-(imidazol-4-yl)glycerol 3-phosphate + 5-amino-1-(5-phospho-beta-D-ribosyl)imidazole-4-carboxamide + L-glutamate + H(+). It functions in the pathway amino-acid biosynthesis; L-histidine biosynthesis; L-histidine from 5-phospho-alpha-D-ribose 1-diphosphate: step 5/9. IGPS catalyzes the conversion of PRFAR and glutamine to IGP, AICAR and glutamate. The HisF subunit catalyzes the cyclization activity that produces IGP and AICAR from PRFAR using the ammonia provided by the HisH subunit. This Bifidobacterium adolescentis (strain ATCC 15703 / DSM 20083 / NCTC 11814 / E194a) protein is Imidazole glycerol phosphate synthase subunit HisF.